The chain runs to 643 residues: Lysophospholipase ARB_05919 (643 aa).

An N-terminal signal peptide occupies residues Met-1–Gly-22. In terms of domain architecture, PLA2c spans Asp-50–Asn-597. Residues Asn-142, Asn-176, Asn-195, Asn-293, Asn-466, Asn-472, Asn-482, Asn-503, Asn-524, Asn-533, Asn-552, and Asn-597 are each glycosylated (N-linked (GlcNAc...) asparagine).

It belongs to the lysophospholipase family.

The protein localises to the secreted. It catalyses the reaction a 1-acyl-sn-glycero-3-phosphocholine + H2O = sn-glycerol 3-phosphocholine + a fatty acid + H(+). Catalyzes the release of fatty acids from lysophospholipids. Phospholipase B may well contribute to pathogenicity by abetting the fungus in damaging host cell membranes. The sequence is that of Lysophospholipase ARB_05919 from Arthroderma benhamiae (strain ATCC MYA-4681 / CBS 112371) (Trichophyton mentagrophytes).